A 40-amino-acid chain; its full sequence is Dolichyl-diphosphooligosaccharide--protein glycosyltransferase subunit 4 (40 aa).

Over 1 to 4 the chain is Lumenal; that stretch reads MISD. Residues 5–25 form a helical membrane-spanning segment; that stretch reads VQLAIFSNVLGVFLFLLVVAY. The Cytoplasmic segment spans residues 26-40; the sequence is HYINANTGKPSAKAK.

Belongs to the OST4 family. In terms of assembly, component of the oligosaccharyltransferase (OST) complex.

It is found in the endoplasmic reticulum membrane. Subunit of the oligosaccharyl transferase (OST) complex that catalyzes the initial transfer of a defined glycan (Glc(3)Man(9)GlcNAc(2) in eukaryotes) from the lipid carrier dolichol-pyrophosphate to an asparagine residue within an Asn-X-Ser/Thr consensus motif in nascent polypeptide chains, the first step in protein N-glycosylation. N-glycosylation occurs cotranslationally and the complex associates with the Sec61 complex at the channel-forming translocon complex that mediates protein translocation across the endoplasmic reticulum (ER). All subunits are required for a maximal enzyme activity. The sequence is that of Dolichyl-diphosphooligosaccharide--protein glycosyltransferase subunit 4 from Drosophila yakuba (Fruit fly).